The chain runs to 173 residues: Ribosome maturation factor RimM (173 aa).

In terms of domain architecture, PRC barrel spans 95 to 173 (EGEYYWRQLE…LMVVDWDPDF (79 aa)).

This sequence belongs to the RimM family. Binds ribosomal protein uS19.

Its subcellular location is the cytoplasm. An accessory protein needed during the final step in the assembly of 30S ribosomal subunit, possibly for assembly of the head region. Essential for efficient processing of 16S rRNA. May be needed both before and after RbfA during the maturation of 16S rRNA. It has affinity for free ribosomal 30S subunits but not for 70S ribosomes. The sequence is that of Ribosome maturation factor RimM from Hahella chejuensis (strain KCTC 2396).